The chain runs to 330 residues: tRNA U34 carboxymethyltransferase (330 aa).

Carboxy-S-adenosyl-L-methionine-binding positions include Lys91, Trp105, Lys110, Gly130, 152–154 (DPS), 181–182 (IE), Met196, Tyr200, and Arg315.

The protein belongs to the class I-like SAM-binding methyltransferase superfamily. CmoB family. As to quaternary structure, homotetramer.

The catalysed reaction is carboxy-S-adenosyl-L-methionine + 5-hydroxyuridine(34) in tRNA = 5-carboxymethoxyuridine(34) in tRNA + S-adenosyl-L-homocysteine + H(+). In terms of biological role, catalyzes carboxymethyl transfer from carboxy-S-adenosyl-L-methionine (Cx-SAM) to 5-hydroxyuridine (ho5U) to form 5-carboxymethoxyuridine (cmo5U) at position 34 in tRNAs. This chain is tRNA U34 carboxymethyltransferase, found in Shewanella frigidimarina (strain NCIMB 400).